The following is a 548-amino-acid chain: Chaperonin GroEL (548 aa).

Residues Thr30–Pro33, Lys51, Asp87–Thr91, Gly415, Asn478–Ala480, and Asp494 each bind ATP.

The protein belongs to the chaperonin (HSP60) family. As to quaternary structure, forms a cylinder of 14 subunits composed of two heptameric rings stacked back-to-back. Interacts with the co-chaperonin GroES.

Its subcellular location is the cytoplasm. It carries out the reaction ATP + H2O + a folded polypeptide = ADP + phosphate + an unfolded polypeptide.. Its function is as follows. Together with its co-chaperonin GroES, plays an essential role in assisting protein folding. The GroEL-GroES system forms a nano-cage that allows encapsulation of the non-native substrate proteins and provides a physical environment optimized to promote and accelerate protein folding. This Janthinobacterium sp. (strain Marseille) (Minibacterium massiliensis) protein is Chaperonin GroEL.